The sequence spans 3036 residues: DmX-like protein 2 (3036 aa).

WD repeat units lie at residues 108 to 145, 167 to 207, and 230 to 278; these read FLSSVTYNLAWDPQDNRLLTATDSIQLWAPPGDDILEE, KTSV…KSSI, and AHPR…EDCL. Ser-326 carries the phosphoserine modification. Positions 417-480 are disordered; the sequence is KQVDHENDDA…EGSPRTYSRL (64 aa). Positions 422–434 are enriched in acidic residues; that stretch reads ENDDADREDEEHS. The segment covering 435-473 has biased composition (basic and acidic residues); that stretch reads QEDRERGLHMKLDHDLSLDRESEAGTGSSEHEDGEREGS. Ser-473 is subject to Phosphoserine. One copy of the WD 4 repeat lies at 492-532; sequence DRKIETLLTEWNKNPDMLFTIHPVDGTFLVWHVKYLDEYNP. Ser-588 is modified (phosphoserine). WD repeat units lie at residues 595–634, 751–803, and 878–920; these read HSRSHSTHMNILAPTVMMISKHIDGSLNQWAVTFADKSAF, LHTS…RKLL, and QPSQ…VQAC. Residues 932–959 form a disordered region; the sequence is SLLSVPGQKNVDSSPETSPSVSPMPHSS. A phosphoserine mark is found at Ser-944 and Ser-945. Over residues 949 to 959 the composition is skewed to low complexity; sequence SPSVSPMPHSS. Residues 1000–1037 form a WD 8 repeat; sequence LSSSSIYPVCLAPYLVVTTCSDNKVRFWKCCMEANPEC. 3 positions are modified to phosphoserine: Ser-1140, Ser-1143, and Ser-1151. WD repeat units follow at residues 1163 to 1204 and 1244 to 1281; these read PNIK…VTEQ and GTPSLPVSLSWVRDGILVVGMDCEMHVYAQWKHAVKFG. Residues Ser-1287 and Ser-1400 each carry the phosphoserine modification. Phosphothreonine is present on Thr-1417. Phosphoserine is present on Ser-1857. The segment covering 1927 to 1936 has biased composition (basic and acidic residues); sequence ISHRMDDVPS. The tract at residues 1927–1952 is disordered; it reads ISHRMDDVPSHSKALSDGNGSSGIEW. Position 1984 is a phosphoserine (Ser-1984). The tract at residues 1999 to 2033 is disordered; it reads KSTDAREKDKQSDQKASDPNMLLTPQEEDDPEGDT. Basic and acidic residues predominate over residues 2001–2014; it reads TDAREKDKQSDQKA. Phosphothreonine is present on Thr-2022. Positions 2024-2033 are enriched in acidic residues; that stretch reads QEEDDPEGDT. A coiled-coil region spans residues 2122-2153; it reads GSYERHQIERRRLQAKREHAERRKSWLQKNQD. A phosphoserine mark is found at Ser-2399 and Ser-2640. WD repeat units lie at residues 2761–2800, 2804–2843, 2850–2892, 2898–2937, 2940–2979, and 2992–3030; these read RNLHNVKRMTSHPVHQYYLTGAQDGSVRMFEWTRPQQLVC, AGNARVTRLYFNSQGNKCGVADGEGFLSIWQVNQTASNPK, CHSK…GNSL, CHDHGATVLQYAPKQQLLISGGRKGHVCIFDIRQRQLIHT, AHDSAIKALALDPYEEYFTTGSAEGNIKVWRLTGHGLIHS, and NIGAGVMQIDIIQGNRLFSCGADGTLKTRVLPNAFNIPN.

As to quaternary structure, interacts with MADD and RAB3GAP.

The protein resides in the cytoplasmic vesicle. It localises to the secretory vesicle. The protein localises to the synaptic vesicle membrane. It is found in the neuronal dense core vesicle. May serve as a scaffold protein for MADD and RAB3GA on synaptic vesicles. Plays a role in the brain as a key controller of neuronal and endocrine homeostatic processes. The sequence is that of DmX-like protein 2 (DMXL2) from Homo sapiens (Human).